The primary structure comprises 51 residues: Light-harvesting protein B800/850/890 beta-2 chain (51 aa).

Over 1–17 (ADEMRNVSDEEAKEFHA) the chain is Cytoplasmic. Positions 16 and 34 each coordinate a bacteriochlorophyll. A helical membrane pass occupies residues 18 to 40 (MFSQAFTVYVGVAVVAHILAWAW). The Periplasmic portion of the chain corresponds to 41 to 51 (RPWIPGDEGFG).

Belongs to the antenna complex beta subunit family. As to quaternary structure, the core complex is formed by different alpha and beta chains, binding bacteriochlorophyll molecules, and arranged most probably in tetrameric structures disposed around the reaction center. The non-pigmented gamma chains may constitute additional components.

The protein localises to the cell inner membrane. In terms of biological role, antenna complexes are light-harvesting systems, which transfer the excitation energy to the reaction centers. This chain is Light-harvesting protein B800/850/890 beta-2 chain, found in Halorhodospira halophila (strain DSM 244 / SL1) (Ectothiorhodospira halophila (strain DSM 244 / SL1)).